Consider the following 511-residue polypeptide: Myrosinase 4 (511 aa).

An N-terminal signal peptide occupies residues 1–23; that stretch reads MAIPKAHYSLAVLVLLFVVVSSS. 3 disulfide bridges follow: Cys31/Cys450, Cys39/Cys445, and Cys230/Cys233. Residues Asn46 and Asn53 are each glycosylated (N-linked (GlcNAc...) asparagine). A beta-D-glucoside is bound by residues Gln64, His165, and 210-211; that span reads NQ. The a beta-D-glucoside site is built by Tyr351 and Glu418. Catalysis depends on Glu418, which acts as the Nucleophile. Residue Asn428 is glycosylated (N-linked (GlcNAc...) asparagine). A beta-D-glucoside contacts are provided by residues Trp467, 474 to 475, and Phe483; that span reads EF. N-linked (GlcNAc...) asparagine glycosylation occurs at Asn489.

Belongs to the glycosyl hydrolase 1 family. In terms of tissue distribution, specifically expressed in roots.

The catalysed reaction is a thioglucoside + H2O = a sugar + a thiol.. It catalyses the reaction Hydrolysis of terminal, non-reducing beta-D-glucosyl residues with release of beta-D-glucose.. Functionally, hydrolyzes sinigrin and, with lower efficiency, p-nitrophenyl beta-D-glucoside. This Arabidopsis thaliana (Mouse-ear cress) protein is Myrosinase 4.